The primary structure comprises 206 residues: Small ribosomal subunit protein uS4 (206 aa).

The 63-residue stretch at 96–158 folds into the S4 RNA-binding domain; the sequence is SRLDNVVYRM…AKKQLRIQNA (63 aa).

It belongs to the universal ribosomal protein uS4 family. In terms of assembly, part of the 30S ribosomal subunit. Contacts protein S5. The interaction surface between S4 and S5 is involved in control of translational fidelity.

One of the primary rRNA binding proteins, it binds directly to 16S rRNA where it nucleates assembly of the body of the 30S subunit. Its function is as follows. With S5 and S12 plays an important role in translational accuracy. This Francisella tularensis subsp. holarctica (strain OSU18) protein is Small ribosomal subunit protein uS4.